The sequence spans 385 residues: S-adenosylmethionine synthase (385 aa).

Position 16 (His16) interacts with ATP. Asp18 contributes to the Mg(2+) binding site. Glu44 serves as a coordination point for K(+). Positions 57 and 100 each coordinate L-methionine. The flexible loop stretch occupies residues Gln100–Arg110. Residues Asp164–Lys166, Lys230–Phe231, Asp239, Arg245–Lys246, Ala262, and Lys266 contribute to the ATP site. An L-methionine-binding site is contributed by Asp239. Lys270 serves as a coordination point for L-methionine.

This sequence belongs to the AdoMet synthase family. In terms of assembly, homotetramer; dimer of dimers. Mg(2+) serves as cofactor. Requires K(+) as cofactor.

Its subcellular location is the cytoplasm. The catalysed reaction is L-methionine + ATP + H2O = S-adenosyl-L-methionine + phosphate + diphosphate. Its pathway is amino-acid biosynthesis; S-adenosyl-L-methionine biosynthesis; S-adenosyl-L-methionine from L-methionine: step 1/1. Functionally, catalyzes the formation of S-adenosylmethionine (AdoMet) from methionine and ATP. The overall synthetic reaction is composed of two sequential steps, AdoMet formation and the subsequent tripolyphosphate hydrolysis which occurs prior to release of AdoMet from the enzyme. The polypeptide is S-adenosylmethionine synthase (Helicobacter pylori (strain J99 / ATCC 700824) (Campylobacter pylori J99)).